The chain runs to 150 residues: Small ribosomal subunit protein eS19 (150 aa).

This sequence belongs to the eukaryotic ribosomal protein eS19 family. In terms of assembly, part of the 30S ribosomal subunit.

Functionally, may be involved in maturation of the 30S ribosomal subunit. The chain is Small ribosomal subunit protein eS19 from Thermococcus kodakarensis (strain ATCC BAA-918 / JCM 12380 / KOD1) (Pyrococcus kodakaraensis (strain KOD1)).